We begin with the raw amino-acid sequence, 262 residues long: Phosphate import ATP-binding protein PstB (262 aa).

Residues 16–257 (IDVRNLNFYY…PHRKETEDYI (242 aa)) enclose the ABC transporter domain. ATP is bound at residue 48 to 55 (GPSGCGKS).

This sequence belongs to the ABC transporter superfamily. Phosphate importer (TC 3.A.1.7) family. The complex is composed of two ATP-binding proteins (PstB), two transmembrane proteins (PstC and PstA) and a solute-binding protein (PstS).

Its subcellular location is the cell inner membrane. The enzyme catalyses phosphate(out) + ATP + H2O = ADP + 2 phosphate(in) + H(+). Functionally, part of the ABC transporter complex PstSACB involved in phosphate import. Responsible for energy coupling to the transport system. The sequence is that of Phosphate import ATP-binding protein PstB from Cupriavidus pinatubonensis (strain JMP 134 / LMG 1197) (Cupriavidus necator (strain JMP 134)).